Here is a 180-residue protein sequence, read N- to C-terminus: MSDERITVVNKWDGPTVKNGLDEVVKKILNDKVGWTEQHNLMNLRLLISFIGVAFSAFACGYDFYAPFPKSKIVLLVCSVSYFICMGVLQLFQWYVEKDCFYEANEVDGKQTRKWAWSSEIKAHDDKYVLSAEFKKEGRSGQGKIIKSIGAYIDNDGEIMIPLVQREVDDLWARLIRSEQ.

Topologically, residues 1 to 45 are cytoplasmic; that stretch reads MSDERITVVNKWDGPTVKNGLDEVVKKILNDKVGWTEQHNLMNLR. The helical transmembrane segment at 46–66 threads the bilayer; that stretch reads LLISFIGVAFSAFACGYDFYA. Over 67-72 the chain is Lumenal; the sequence is PFPKSK. Residues 73–93 traverse the membrane as a helical segment; the sequence is IVLLVCSVSYFICMGVLQLFQ. Residues 94 to 180 lie on the Cytoplasmic side of the membrane; that stretch reads WYVEKDCFYE…LWARLIRSEQ (87 aa).

The protein belongs to the SPCS2 family. Component of the signal peptidase complex (SPC) composed of a catalytic subunit sec-11 and three accessory subunits spcs-1, spcs-2 and spcs-3. The complex induces a local thinning of the ER membrane which is used to measure the length of the signal peptide (SP) h-region of protein substrates. This ensures the selectivity of the complex towards h-regions shorter than 18-20 amino acids.

It is found in the endoplasmic reticulum membrane. Its function is as follows. Component of the signal peptidase complex (SPC) which catalyzes the cleavage of N-terminal signal sequences from nascent proteins as they are translocated into the lumen of the endoplasmic reticulum. Enhances the enzymatic activity of SPC and facilitates the interactions between different components of the translocation site. In Caenorhabditis briggsae, this protein is Signal peptidase complex subunit 2.